Consider the following 199-residue polypeptide: NAD(P)H dehydrogenase (quinone) (199 aa).

Positions 4–190 (VLVLYYSAYG…DAARFQGAHV (187 aa)) constitute a Flavodoxin-like domain. FMN is bound by residues 10-15 (SAYGHI) and 78-80 (TRY). Y12 is an NAD(+) binding site. Residue W98 participates in substrate binding. FMN contacts are provided by residues 113-119 (SSATQHG) and H134.

This sequence belongs to the WrbA family. It depends on FMN as a cofactor.

The catalysed reaction is a quinone + NADH + H(+) = a quinol + NAD(+). The enzyme catalyses a quinone + NADPH + H(+) = a quinol + NADP(+). The polypeptide is NAD(P)H dehydrogenase (quinone) (Sinorhizobium fredii (strain NBRC 101917 / NGR234)).